A 113-amino-acid chain; its full sequence is EVKLEESGGGLVQPGGSMKLSCVASGFTFSNYWMNWVRQSPEKGLEWIAEIRLKSHNYATHYAESVKGRFTISRDDSKSSVFLQMNNLRAEDTGIHYCTTGFAYWGQGTLVTV.

An Ig-like domain is found at Glu-1 to Val-113. The cysteines at positions 22 and 98 are disulfide-linked.

This chain is Ig heavy chain V-III region E109, found in Mus musculus (Mouse).